The chain runs to 100 residues: Small ribosomal subunit protein bS20 (100 aa).

It belongs to the bacterial ribosomal protein bS20 family.

Binds directly to 16S ribosomal RNA. This is Small ribosomal subunit protein bS20 from Synechococcus sp. (strain JA-3-3Ab) (Cyanobacteria bacterium Yellowstone A-Prime).